The chain runs to 564 residues: Urease subunit alpha (564 aa).

Residues 126 to 564 (GGIDTHIHFI…LPMAQRYFLF (439 aa)) form the Urease domain. 3 residues coordinate Ni(2+): His131, His133, and Lys214. Lys214 is modified (N6-carboxylysine). Substrate is bound at residue His216. Positions 243 and 269 each coordinate Ni(2+). His317 (proton donor) is an active-site residue. Position 357 (Asp357) interacts with Ni(2+).

Belongs to the metallo-dependent hydrolases superfamily. Urease alpha subunit family. As to quaternary structure, heterotrimer of UreA (gamma), UreB (beta) and UreC (alpha) subunits. Three heterotrimers associate to form the active enzyme. Requires Ni cation as cofactor. In terms of processing, carboxylation allows a single lysine to coordinate two nickel ions.

It localises to the cytoplasm. It catalyses the reaction urea + 2 H2O + H(+) = hydrogencarbonate + 2 NH4(+). Its pathway is nitrogen metabolism; urea degradation; CO(2) and NH(3) from urea (urease route): step 1/1. The polypeptide is Urease subunit alpha (Burkholderia thailandensis (strain ATCC 700388 / DSM 13276 / CCUG 48851 / CIP 106301 / E264)).